Here is a 183-residue protein sequence, read N- to C-terminus: Glutathione-regulated potassium-efflux system ancillary protein KefG (183 aa).

This sequence belongs to the NAD(P)H dehydrogenase (quinone) family. KefG subfamily. Interacts with KefB.

It localises to the cell inner membrane. It carries out the reaction a quinone + NADH + H(+) = a quinol + NAD(+). The enzyme catalyses a quinone + NADPH + H(+) = a quinol + NADP(+). Functionally, regulatory subunit of a potassium efflux system that confers protection against electrophiles. Required for full activity of KefB. This chain is Glutathione-regulated potassium-efflux system ancillary protein KefG, found in Shigella flexneri serotype 5b (strain 8401).